The following is a 454-amino-acid chain: Ribosomal protein uS12 methylthiotransferase RimO (454 aa).

An MTTase N-terminal domain is found at 14–125; that stretch reads SKIAFSHVGC…IAKVLDRVEK (112 aa). Cys-23, Cys-59, Cys-88, Cys-163, Cys-167, and Cys-170 together coordinate [4Fe-4S] cluster. The Radical SAM core domain occupies 149–378; the sequence is DKNKFVAYLR…ISVQQNISRE (230 aa). Positions 381–452 constitute a TRAM domain; that stretch reads QIYVGSKMKI…EYDLYGETIK (72 aa).

The protein belongs to the methylthiotransferase family. RimO subfamily. Requires [4Fe-4S] cluster as cofactor.

The protein resides in the cytoplasm. It catalyses the reaction L-aspartate(89)-[ribosomal protein uS12]-hydrogen + (sulfur carrier)-SH + AH2 + 2 S-adenosyl-L-methionine = 3-methylsulfanyl-L-aspartate(89)-[ribosomal protein uS12]-hydrogen + (sulfur carrier)-H + 5'-deoxyadenosine + L-methionine + A + S-adenosyl-L-homocysteine + 2 H(+). Catalyzes the methylthiolation of an aspartic acid residue of ribosomal protein uS12. This chain is Ribosomal protein uS12 methylthiotransferase RimO, found in Prochlorococcus marinus (strain MIT 9301).